The primary structure comprises 443 residues: Ribulose bisphosphate carboxylase large chain (443 aa).

Positions 89 and 139 each coordinate substrate. K141 serves as the catalytic Proton acceptor. Residue K143 coordinates substrate. Mg(2+) contacts are provided by K167, D169, and E170. K167 is subject to N6-carboxylysine. The Proton acceptor role is filled by H260. Positions 261, 293, and 345 each coordinate substrate.

It belongs to the RuBisCO large chain family. Type I subfamily. As to quaternary structure, heterohexadecamer of 8 large chains and 8 small chains; disulfide-linked. The disulfide link is formed within the large subunit homodimers. Mg(2+) is required as a cofactor. In terms of processing, the disulfide bond which can form in the large chain dimeric partners within the hexadecamer appears to be associated with oxidative stress and protein turnover.

The protein localises to the plastid. Its subcellular location is the chloroplast. It carries out the reaction 2 (2R)-3-phosphoglycerate + 2 H(+) = D-ribulose 1,5-bisphosphate + CO2 + H2O. The catalysed reaction is D-ribulose 1,5-bisphosphate + O2 = 2-phosphoglycolate + (2R)-3-phosphoglycerate + 2 H(+). Functionally, ruBisCO catalyzes two reactions: the carboxylation of D-ribulose 1,5-bisphosphate, the primary event in carbon dioxide fixation, as well as the oxidative fragmentation of the pentose substrate in the photorespiration process. Both reactions occur simultaneously and in competition at the same active site. This Callitriche heterophylla (Large water-starwort) protein is Ribulose bisphosphate carboxylase large chain.